Reading from the N-terminus, the 443-residue chain is Xaa-Pro dipeptidase (443 aa).

Asp-246, Asp-257, His-339, Glu-384, and Glu-423 together coordinate Mn(2+).

It belongs to the peptidase M24B family. Bacterial-type prolidase subfamily. Mn(2+) is required as a cofactor.

The catalysed reaction is Xaa-L-Pro dipeptide + H2O = an L-alpha-amino acid + L-proline. Functionally, splits dipeptides with a prolyl residue in the C-terminal position. In Yersinia pestis bv. Antiqua (strain Nepal516), this protein is Xaa-Pro dipeptidase.